The sequence spans 277 residues: Protein PTST, chloroplastic (277 aa).

A chloroplast-targeting transit peptide spans methionine 1–valine 44. The stretch at aspartate 95–asparagine 152 forms a coiled coil.

In terms of assembly, interacts with GBSS1.

It localises to the plastid. The protein resides in the chloroplast stroma. Involved in targeting GBSS1 to the starch granule. Was originally thought to be a carbohydrate-binding scaffold protein, but it has been shown that it is mainly found as a soluble protein and that interaction with GBSS1 is a pre-requisite for subsequent starch granule binding. Dissociation from starch as a function of pH, Mg(2+) concentration or redox state is not observed. Interacts primarily with amylopectin and is required for amylose synthesis. The chain is Protein PTST, chloroplastic from Arabidopsis thaliana (Mouse-ear cress).